A 1122-amino-acid chain; its full sequence is DNA polymerase (1122 aa).

Belongs to the DNA polymerase type-B family. In terms of assembly, heterodimer with the terminal protein; this heterodimer binds to bp 9 to 18 of the genome. Forms a complex with viral pTP, DBP and hosts NFIA and POU2F1/OCT1 for initiation of replication.

The protein localises to the host nucleus. It catalyses the reaction DNA(n) + a 2'-deoxyribonucleoside 5'-triphosphate = DNA(n+1) + diphosphate. In terms of biological role, eukaryotic-type DNA polymerase involved in viral genomic replication. DNA synthesis is protein primed, and acts in a strand displacement replication. Assembles in complex with viral pTP, DBP, host NFIA and host POU2F1/OCT1 on viral origin of replication. The polymerase covalently transfers dCMP onto pTP, thereby initiating complementary strand synthesis. This Human adenovirus B serotype 7 (HAdV-7) protein is DNA polymerase.